The following is a 185-amino-acid chain: ATP-dependent protease subunit HslV (185 aa).

The active site involves Thr-2. Na(+) contacts are provided by Gly-157, Cys-160, and Thr-163.

Belongs to the peptidase T1B family. HslV subfamily. In terms of assembly, a double ring-shaped homohexamer of HslV is capped on each side by a ring-shaped HslU homohexamer. The assembly of the HslU/HslV complex is dependent on binding of ATP.

It is found in the cytoplasm. It carries out the reaction ATP-dependent cleavage of peptide bonds with broad specificity.. With respect to regulation, allosterically activated by HslU binding. Its function is as follows. Protease subunit of a proteasome-like degradation complex believed to be a general protein degrading machinery. In Idiomarina loihiensis (strain ATCC BAA-735 / DSM 15497 / L2-TR), this protein is ATP-dependent protease subunit HslV.